Reading from the N-terminus, the 174-residue chain is Regenerating islet-derived protein 3-alpha (174 aa).

An N-terminal signal peptide occupies residues 1-25; the sequence is MLPRLSFNNVSWTLLYYLFIFQVRG. The propeptide occupies 26–36; sequence EDSQKAVPSTR. 3 disulfides stabilise this stretch: Cys39/Cys50, Cys67/Cys170, and Cys145/Cys162. Residues 46–171 enclose the C-type lectin domain; sequence YRSYCYTLVT…CDVELPFVCK (126 aa). Positions 102–117 are sufficient to activate EXTL3; the sequence is WIWLHDPTMGQQPNGG. The Zn(2+) site is built by His106 and Glu120.

As to quaternary structure, forms a hexameric membrane-permeabilizing oligomeric pore on membrane phospholipids. The hexamer is formed by three dimers related by helical symmetry. Forms filaments, filamentation traps pore complexes and limits damage to host cells. Interacts with EXTL3. In terms of processing, proteolytic processing by trypsin removes an inhibitory N-terminal propeptide and is essential for peptidoglycan binding and antibacterial activity. As to expression, low expression found in healthy pancreas.

It localises to the secreted. Its function is as follows. Bactericidal C-type lectin. The lack of the EPN motif may explain its inability to bind peptidoglycan. Functionally, acts as a hormone in response to different stimuli like anti-inflammatory signals, such as IL17A, or gut microbiome. Secreted by different cell types to activate its receptor EXTL3 and induce cell specific signaling pathways. Induced by IL17A in keratinocytes, regulates keratinocyte proliferation and differentiation after skin injury via activation of EXTL3-PI3K-AKT signaling pathway. In parallel, inhibits skin inflammation through the inhibition of inflammatory cytokines such as IL6 and TNF. In pancreas, is able to permealize beta-cells membrane and stimulate their proliferation. The chain is Regenerating islet-derived protein 3-alpha (Reg3a) from Rattus norvegicus (Rat).